Consider the following 880-residue polypeptide: Nonsense-mediated mRNA decay factor SMG7-like (880 aa).

TPR repeat units lie at residues 149–183 (QEQY…NPHN) and 184–217 (QLAV…GASN). Positions 669–711 (RLGLSKPNGLGPIDETGPVSAFDSLSINSSTEHPASSYSPPTP) are disordered. Positions 691–701 (DSLSINSSTEH) are enriched in polar residues.

Functionally, may play a role in growth and development. This is Nonsense-mediated mRNA decay factor SMG7-like from Arabidopsis thaliana (Mouse-ear cress).